We begin with the raw amino-acid sequence, 154 residues long: MGGIMDARRLEDEVEMPLEGIVYGEVSGWLTIIGILVAIAGIIIGVVTGNSVFDYQSTIKDLLSGHDEEKIWTDDSIFHSEPHGYWFLNVIHTGDGIAMFGIALAVYGGIVGLLLLIVFTFRSREVLLYKKGLYTFLAIAIFCLMVYCAWEAEF.

A run of 3 helical transmembrane segments spans residues 26 to 48, 97 to 119, and 132 to 150; these read VSGW…GVVT, IAMF…LIVF, and GLYT…YCAW.

Its subcellular location is the cell membrane. This is an uncharacterized protein from Archaeoglobus fulgidus (strain ATCC 49558 / DSM 4304 / JCM 9628 / NBRC 100126 / VC-16).